The primary structure comprises 403 residues: MVTSTVKLEEVRRMQRAEGMAAVLAIGTATPANCVYQTDYPDYYFRVTNSEHLTNLKERFQRMCESSQIRKRYTHLTEEILQENPSMCVFTAPSLDARQDMVVAEVPKLGKAAAEEAIKEWGQPMSRITHLVFCTTNGVDMPGADYQVAKMLGLPTSVKRLMMYQQGCFAGGTVLRVAKDLAENNRGARVLVVCSEIMAMAFRGPSESHLDSLVGHALFGDGAAAVIVGSDPDEAADERPLFQIVSASQTILPGTEDAIVGHLREVGLTFHLPKDVPEFISDSVEGALTDAFMPLGVHDWNSIFWVVHPGGPAILDQVEEKVALHKARMRASRNVLSEYGNMASATVLFVLDEMRKLSADDGHATTGEGMDWGVLFGFGPGLTVETIVLHSVPITAAAPLIMQ.

59–66 (RFQRMCES) serves as a coordination point for CoA. The active-site Acyl-thioester intermediate is the cysteine 168. 220 to 221 (GD) is a binding site for substrate. Alanine 313 lines the CoA pocket.

Belongs to the thiolase-like superfamily. Chalcone/stilbene synthases family. In terms of assembly, homodimer.

It catalyses the reaction (E)-4-coumaroyl-CoA + 3 malonyl-CoA + 3 H(+) = 2',4,4',6'-tetrahydroxychalcone + 3 CO2 + 4 CoA. It functions in the pathway secondary metabolite biosynthesis; flavonoid biosynthesis. In terms of biological role, the primary product of this enzyme is 4,2',4',6'-tetrahydroxychalcone (also termed naringenin-chalcone or chalcone) which can under specific conditions spontaneously isomerize into naringenin. The chain is Chalcone synthase 2 (CHS2) from Oryza sativa subsp. japonica (Rice).